A 484-amino-acid polypeptide reads, in one-letter code: Pyruvate kinase (484 aa).

Residue R33 participates in substrate binding. Residues N35, S37, D67, and T68 each contribute to the K(+) site. Residue 35 to 38 (NFSH) coordinates ATP. Positions 74 and 155 each coordinate ATP. E221 is a Mg(2+) binding site. Positions 244, 245, and 277 each coordinate substrate. D245 is a binding site for Mg(2+).

This sequence belongs to the pyruvate kinase family. Homotetramer. Mg(2+) is required as a cofactor. K(+) serves as cofactor.

It catalyses the reaction pyruvate + ATP = phosphoenolpyruvate + ADP + H(+). Its pathway is carbohydrate degradation; glycolysis; pyruvate from D-glyceraldehyde 3-phosphate: step 5/5. The sequence is that of Pyruvate kinase (pyk) from Chlamydia pneumoniae (Chlamydophila pneumoniae).